Consider the following 51-residue polypeptide: Ovomucoid (51 aa).

The Kazal-like domain occupies 3-51 (VDCSGYPKPDCTLESFPLCGSDNQTYSNKCAFCNAAVERNVTLRHLGEC). 3 disulfides stabilise this stretch: cysteine 5–cysteine 35, cysteine 13–cysteine 32, and cysteine 21–cysteine 51. An N-linked (GlcNAc...) asparagine glycan is attached at asparagine 42.

It is found in the secreted. This chain is Ovomucoid, found in Rhynchotus rufescens (Red-winged tinamou).